The primary structure comprises 92 residues: Conotoxin Mr15.2 (92 aa).

An N-terminal signal peptide occupies residues 1 to 20; the sequence is MSTLKMMLLILLLLLPMATF. A propeptide spanning residues 21-53 is cleaved from the precursor; sequence DSDGQAIPGGGIPSAVNSRVGGDEKSGRSLEKR. A disordered region spans residues 30 to 49; that stretch reads GGIPSAVNSRVGGDEKSGRS.

The protein belongs to the conotoxin N superfamily. Post-translationally, contains 4 disulfide bonds. In terms of tissue distribution, expressed by the venom duct.

Its subcellular location is the secreted. This is Conotoxin Mr15.2 from Conus marmoreus (Marble cone).